The chain runs to 430 residues: Aspartate--tRNA(Asp/Asn) ligase (430 aa).

Glu166 contacts L-aspartate. Residues 188–191 (QLYK) are aspartate. Arg210 lines the L-aspartate pocket. ATP-binding positions include 210–212 (RAE), 218–220 (KHL), and Glu353. 2 residues coordinate Mg(2+): Glu353 and Ser356. Residues Ser356 and Arg360 each contribute to the L-aspartate site. 401–404 (GAER) is a binding site for ATP.

The protein belongs to the class-II aminoacyl-tRNA synthetase family. Type 2 subfamily. As to quaternary structure, homodimer. It depends on Mg(2+) as a cofactor.

The protein localises to the cytoplasm. It carries out the reaction tRNA(Asx) + L-aspartate + ATP = L-aspartyl-tRNA(Asx) + AMP + diphosphate. Aspartyl-tRNA synthetase with relaxed tRNA specificity since it is able to aspartylate not only its cognate tRNA(Asp) but also tRNA(Asn). Reaction proceeds in two steps: L-aspartate is first activated by ATP to form Asp-AMP and then transferred to the acceptor end of tRNA(Asp/Asn). The chain is Aspartate--tRNA(Asp/Asn) ligase from Methanospirillum hungatei JF-1 (strain ATCC 27890 / DSM 864 / NBRC 100397 / JF-1).